The following is a 538-amino-acid chain: Natural resistance-associated macrophage protein 1 (538 aa).

Positions 1 to 36 are disordered; that stretch reads MTGDTDPPKQSRTQYGSISSSPSPGPPQVPPGGTYL. The Cytoplasmic portion of the chain corresponds to 1–54; that stretch reads MTGDTDPPKQSRTQYGSISSSPSPGPPQVPPGGTYLSEKIPIPNAEPGTFSLRK. Residues 55–75 traverse the membrane as a helical segment; it reads LWAFTGPGFLMSIAYLDPGNI. The Extracellular segment spans residues 76 to 81; it reads QSDLQA. The helical transmembrane segment at 82–102 threads the bilayer; it reads GAVAGFKLLWVLLWATVLGLL. Residues 103–139 lie on the Cytoplasmic side of the membrane; the sequence is CQRLAARLGVVTGKDLGEICHLYYPKVPRTLLWLNME. A helical membrane pass occupies residues 140 to 160; sequence LAIVGSDMQEVIGTAIAFNLL. At 161–164 the chain is on the extracellular side; the sequence is SAGR. The chain crosses the membrane as a helical span at residues 165–185; sequence IPLWGGVLITVVDTFFFLYLN. At 186–193 the chain is on the cytoplasmic side; it reads NYGLRKLE. A helical transmembrane segment spans residues 194 to 214; it reads AFFAFLIAIMAFTFGYEYVVA. The Extracellular segment spans residues 215–240; it reads RPAQGALLRGLFLPSCSGCGQPELLQ. Residues 241–261 traverse the membrane as a helical segment; it reads AVGIVGAIIMPHNIYLHSALV. The Cytoplasmic portion of the chain corresponds to 262–286; it reads KSREVDRTRREDIREANMYFLIEST. A helical membrane pass occupies residues 287-307; sequence IALFVSFFINLFVMAVFGQAF. Over 308-346 the chain is Extracellular; that stretch reads YQQTNQAAFNICANSSLHDYAKIFPRNNLTVAVDFYQGG. 2 N-linked (GlcNAc...) asparagine glycosylation sites follow: Asn321 and Asn335. Residues 347 to 367 form a helical membrane-spanning segment; it reads VILGCLFGPAALYIWAVGLLA. The Cytoplasmic portion of the chain corresponds to 368–394; the sequence is AGQSSTMTGTYAGQFVMEGFLKLRWSR. A helical membrane pass occupies residues 395-415; that stretch reads FARLLLTRSCAILPALLVAVF. Residues 416–432 lie on the Extracellular side of the membrane; sequence KELQDLSSLNDLLNVLQ. A helical membrane pass occupies residues 433–453; that stretch reads SLLLPFAVLPILTFTSMPALM. At 454 to 468 the chain is on the cytoplasmic side; that stretch reads QEFASGRVNKVITSS. Residues 469-489 traverse the membrane as a helical segment; that stretch reads IMLLVCAINFYFLVSYLPSLP. At 490 to 492 the chain is on the extracellular side; sequence HPA. A helical membrane pass occupies residues 493–513; it reads YFGLVALLAVIYLGLTTYLVW. At 514–538 the chain is on the cytoplasmic side; it reads TCLIAHGATLLVHSSHQHFLYGLLE.

It belongs to the NRAMP family.

It localises to the late endosome membrane. It is found in the lysosome membrane. It carries out the reaction Zn(2+)(in) + H(+)(out) = Zn(2+)(out) + H(+)(in). The enzyme catalyses Fe(2+)(in) + H(+)(out) = Fe(2+)(out) + H(+)(in). The catalysed reaction is Mn(2+)(in) + H(+)(out) = Mn(2+)(out) + H(+)(in). In terms of biological role, macrophage-specific antiporter that fluxes metal ions in either direction against a proton gradient. Localized to late endosomal lysosomal membranes, delivers bivalent cations from the cytosol into these acidic compartments where they may directly affect antimicrobial activity. Involved in iron metabolism and host natural resistance to infection with intracellular parasites. Pathogen resistance involves sequestration of Fe(2+) and Mn(2+), cofactors of both prokaryotic and eukaryotic catalases and superoxide dismutases, not only to protect the macrophage against its own generation of reactive oxygen species, but to deny the cations to the pathogen for synthesis of its protective enzymes. This is Natural resistance-associated macrophage protein 1 (SLC11A1) from Sus scrofa (Pig).